The chain runs to 664 residues: Cytoskeleton-associated protein 2 (664 aa).

The disordered stretch occupies residues 1-38 (MAESRKRFLGRAARNPLPVTRDLQLPPTRRDQPAFREQ). Residues 28–38 (TRRDQPAFREQ) are compositionally biased toward basic and acidic residues. The segment at 160–319 (PKQDSNVSKK…ASKDAARTDS (160 aa)) is association with alpha- and beta-tubulin. Position 186 is a phosphoserine (serine 186). 4 disordered regions span residues 254 to 273 (IRSL…SRPL), 283 to 328 (LDKE…MVKP), 366 to 393 (GKGK…NPVG), and 512 to 545 (AHAT…KVEV). Residues 300–309 (GSSQAPSRSI) are compositionally biased toward polar residues. The span at 366 to 375 (GKGKGLKRPP) shows a compositional bias: basic residues. Residues 533–545 (PGEENEHHGKVEV) are compositionally biased toward basic and acidic residues. Threonine 561 is subject to Phosphothreonine. Serine 577 is modified (phosphoserine). Position 579 is a phosphothreonine (threonine 579). The residue at position 584 (serine 584) is a Phosphoserine.

The protein belongs to the CKAP2 family. Associates with alpha- and beta-tubulins.

It is found in the cytoplasm. The protein localises to the cytoskeleton. The protein resides in the spindle. It localises to the spindle pole. Its function is as follows. Possesses microtubule stabilizing properties. Involved in regulating aneuploidy, cell cycling, and cell death in a p53-dependent manner. The sequence is that of Cytoskeleton-associated protein 2 from Mus musculus (Mouse).